We begin with the raw amino-acid sequence, 412 residues long: FAD-dependent monooxygenase nscC (412 aa).

The signal sequence occupies residues 1–21; sequence MGKQQETILIIGAGIAGLTTS. Positions 35 and 46 each coordinate FAD. A glycan (N-linked (GlcNAc...) asparagine) is linked at asparagine 92. Position 119 (arginine 119) interacts with FAD. N-linked (GlcNAc...) asparagine glycosylation is found at asparagine 170 and asparagine 231. 2 residues coordinate FAD: aspartate 326 and glycine 339.

The protein belongs to the paxM FAD-dependent monooxygenase family. FAD is required as a cofactor.

It participates in secondary metabolite biosynthesis. FAD-dependent monooxygenase; part of the gene cluster that mediates the biosynthesis of neosartoricin B, a prenylated anthracenone that probably exhibits T-cell antiproliferative activity, suggestive of a physiological role as an immunosuppressive agent. The non-reducing polyketide synthase nscA probably synthesizes and cyclizes the decaketide backbone. The hydrolase nscB then mediates the product release through hydrolysis followed by spontaneous decarboxylation. The prenyltransferase nscD catalyzes the addition of the dimethylallyl group to the aromatic C5. The FAD-dependent monooxygenase nscC is then responsible for the stereospecific hydroxylation at C2. Neosartoricin B can be converted into two additional compounds neosartoricins C and D. Neosartoricin C is a spirocyclic compound that is cyclized through the attack of C3 hydroxyl on C14, followed by dehydration. On the other hand, neosartoricin D is a further cyclized compound in which attack of C2 on C14 in neosartoricin C results in the formation of the acetal-containing dioxabicyclo-octanone ring. Both of these compounds are novel and possibly represent related metabolites of the gene cluster. The chain is FAD-dependent monooxygenase nscC from Trichophyton verrucosum (strain HKI 0517).